The sequence spans 20 residues: Short cationic peptide-6a (20 aa).

Position 20 is a serine amide (Ser-20).

Expressed by the venom gland.

It is found in the secreted. In Cupiennius salei (American wandering spider), this protein is Short cationic peptide-6a.